The primary structure comprises 781 residues: Homeobox protein SIX4 (781 aa).

A compositionally biased stretch (polar residues) spans 1-10 (MSSSSPTGQI). Disordered regions lie at residues 1-55 (MSSS…PLEP) and 270-321 (WFKN…GITN). The residue at position 2 (serine 2) is an N-acetylserine. A DNA-binding region (homeobox) is located at residues 223-282 (GEETVYCFKEKSRNALKELYKQNRYPSPAEKRHLAKITGLSLTQVSNWFKNRRQRDRNPS). 2 stretches are compositionally biased toward basic and acidic residues: residues 278–290 (DRNP…KSES) and 299–308 (ESSKGHEDLS). Phosphoserine is present on serine 640.

It belongs to the SIX/Sine oculis homeobox family. In terms of assembly, interacts with EYA3; acts cooperatively with EYA3 to transactivate target genes through interaction and nuclear translocation of EYA3 protein.

The protein resides in the nucleus. It is found in the cytoplasm. Functionally, transcriptional regulator which can act as both a transcriptional repressor and activator by binding a DNA sequence on these target genes and is involved in processes like cell differentiation, cell migration and cell survival. Transactivates gene expression by binding a 5'-[CAT]A[CT][CT][CTG]GA[GAT]-3' motif present in the Trex site and a 5'-TCA[AG][AG]TTNC-3' motif present in the MEF3 site of the muscle-specific genes enhancer. Acts cooperatively with EYA proteins to transactivate their target genes through interaction and nuclear translocation of EYA protein. Acts synergistically with SIX1 to regulate target genes involved in formation of various organs, including muscle, kidney, gonad, ganglia, olfactory epithelium and cranial skeleton. Plays a role in several important steps of muscle development. Controls the genesis of hypaxial myogenic progenitors in the dermomyotome by transactivating PAX3 and the delamination and migration of the hypaxial precursors from the ventral lip to the limb buds through the transactivation of PAX3, MET and LBX1. Controls myoblast determination by transactivating MYF5, MYOD1 and MYF6. Controls somitic differentiation in myocyte through MYOG transactivation. Plays a role in synaptogenesis and sarcomere organization by participating in myofiber specialization during embryogenesis by activating fast muscle program in the primary myotome resulting in an up-regulation of fast muscle genes, including ATP2A1, MYL1 and TNNT3. Simultaneously, is also able to activate inhibitors of slow muscle genes, such as SOX6, HRASLS, and HDAC4, thereby restricting the activation of the slow muscle genes. During muscle regeneration, negatively regulates differentiation of muscle satellite cells through down-regulation of MYOG expression. During kidney development regulates the early stages of metanephros development and ureteric bud formation through regulation of GDNF, SALL1, PAX8 and PAX2 expression. Plays a role in gonad development by regulating both testis determination and size determination. In gonadal sex determination, transactivates ZFPM2 by binding a MEF3 consensus sequence, resulting in SRY up-regulation. In gonadal size determination, transactivates NR5A1 by binding a MEF3 consensus sequence resulting in gonadal precursor cell formation regulation. During olfactory development mediates the specification and patterning of olfactory placode through fibroblast growth factor and BMP4 signaling pathways and also regulates epithelial cell proliferation during placode formation. Promotes survival of sensory neurons during early trigeminal gangliogenesis. In the developing dorsal root ganglia, up-regulates SLC12A2 transcription. Regulates early thymus/parathyroid organogenesis through regulation of GCM2 and FOXN1 expression. Forms gustatory papillae during development of the tongue. Also plays a role during embryonic cranial skeleton morphogenesis. This is Homeobox protein SIX4 (SIX4) from Homo sapiens (Human).